Here is a 164-residue protein sequence, read N- to C-terminus: SsrA-binding protein (164 aa).

Residues 143–164 (HDKRQDEKQKSIKKEINSVLKR) form a disordered region. Residues 145–158 (KRQDEKQKSIKKEI) show a composition bias toward basic and acidic residues.

Belongs to the SmpB family.

It localises to the cytoplasm. Its function is as follows. Required for rescue of stalled ribosomes mediated by trans-translation. Binds to transfer-messenger RNA (tmRNA), required for stable association of tmRNA with ribosomes. tmRNA and SmpB together mimic tRNA shape, replacing the anticodon stem-loop with SmpB. tmRNA is encoded by the ssrA gene; the 2 termini fold to resemble tRNA(Ala) and it encodes a 'tag peptide', a short internal open reading frame. During trans-translation Ala-aminoacylated tmRNA acts like a tRNA, entering the A-site of stalled ribosomes, displacing the stalled mRNA. The ribosome then switches to translate the ORF on the tmRNA; the nascent peptide is terminated with the 'tag peptide' encoded by the tmRNA and targeted for degradation. The ribosome is freed to recommence translation, which seems to be the essential function of trans-translation. The polypeptide is SsrA-binding protein (Prochlorococcus marinus (strain MIT 9312)).